An 83-amino-acid polypeptide reads, in one-letter code: MKGSAFAIILGLVVLCACSFAEDEQDQFASPNELLRSMFLESRHELIPEVEGRYCQKWMWTCDSERKCCEGYVCELWCKYNLG.

An N-terminal signal peptide occupies residues 1–21; it reads MKGSAFAIILGLVVLCACSFA. Residues 22–53 constitute a propeptide that is removed on maturation; it reads EDEQDQFASPNELLRSMFLESRHELIPEVEGR. 3 cysteine pairs are disulfide-bonded: Cys55–Cys69, Cys62–Cys74, and Cys68–Cys78. At Leu82 the chain carries Leucine amide.

The protein belongs to the neurotoxin 30 (phrixotoxin) family. In terms of tissue distribution, expressed by the venom gland.

The protein localises to the secreted. Inhibits voltage-gated potassium channels of the subtype Kv4.1/KCND1 with high affinity and shows weak effects on Kv4.2/KCND2 and Kv2.1/KCNB1 subtypes. The toxin modifies the gating behavior of the channel and may interact with the S3-S4 extracellular loop. This chain is Kappa-theraphotoxin-Cg2a, found in Chilobrachys guangxiensis (Chinese earth tiger tarantula).